A 261-amino-acid chain; its full sequence is Chanoclavine-I dehydrogenase easD (261 aa).

Positions 1 to 20 (MPSMTSKVFAITGGASGIGA) are cleaved as a signal peptide. An NADP(+)-binding site is contributed by Ile18. The N-linked (GlcNAc...) asparagine glycan is linked to Asn43. NADP(+) is bound by residues Asp66, Arg132, Tyr166, Lys170, and Thr201. The active-site Proton donor is Tyr166. Lys170 acts as the Lowers pKa of active site Tyr in catalysis.

This sequence belongs to the short-chain dehydrogenases/reductases (SDR) family. In terms of assembly, homotetramer.

The enzyme catalyses chanoclavine-I + NAD(+) = chanoclavine-I aldehyde + NADH + H(+). It functions in the pathway alkaloid biosynthesis; ergot alkaloid biosynthesis. Chanoclavine-I dehydrogenase; part of the gene cluster that mediates the biosynthesis of fungal ergot alkaloid. DmaW catalyzes the first step of ergot alkaloid biosynthesis by condensing dimethylallyl diphosphate (DMAP) and tryptophan to form 4-dimethylallyl-L-tryptophan. The second step is catalyzed by the methyltransferase easF that methylates 4-dimethylallyl-L-tryptophan in the presence of S-adenosyl-L-methionine, resulting in the formation of 4-dimethylallyl-L-abrine. The catalase easC and the FAD-dependent oxidoreductase easE then transform 4-dimethylallyl-L-abrine to chanoclavine-I which is further oxidized by easD in the presence of NAD(+), resulting in the formation of chanoclavine-I aldehyde. Agroclavine dehydrogenase easG then mediates the conversion of chanoclavine-I aldehyde to agroclavine via a non-enzymatic adduct reaction: the substrate is an iminium intermediate that is formed spontaneously from chanoclavine-I aldehyde in the presence of glutathione. The presence of easA is not required to complete this reaction. Further conversion of agroclavine to paspalic acid is a two-step process involving oxidation of agroclavine to elymoclavine and of elymoclavine to paspalic acid, the second step being performed by the elymoclavine oxidase cloA. Paspalic acid is then further converted to D-lysergic acid. Ergopeptines are assembled from D-lysergic acid and three different amino acids by the D-lysergyl-peptide-synthetases composed each of a monomudular and a trimodular nonribosomal peptide synthetase subunit. LpsB and lpsC encode the monomodular subunits responsible for D-lysergic acid activation and incorporation into the ergopeptine backbone. LpsA1 and A2 subunits encode the trimodular nonribosomal peptide synthetase assembling the tripeptide portion of ergopeptines. LpsA1 is responsible for formation of the major ergopeptine, ergotamine, and lpsA2 for alpha-ergocryptine, the minor ergopeptine of the total alkaloid mixture elaborated by C.purpurea. D-lysergyl-tripeptides are assembled by the nonribosomal peptide synthetases and released as N-(D-lysergyl-aminoacyl)-lactams. Cyclolization of the D-lysergyl-tripeptides is performed by the Fe(2+)/2-ketoglutarate-dependent dioxygenase easH which introduces a hydroxyl group into N-(D-lysergyl-aminoacyl)-lactam at alpha-C of the aminoacyl residue followed by spontaneous condensation with the terminal lactam carbonyl group. In Claviceps purpurea (Ergot fungus), this protein is Chanoclavine-I dehydrogenase easD.